Reading from the N-terminus, the 735-residue chain is Photosystem I P700 chlorophyll a apoprotein A2 (735 aa).

Helical transmembrane passes span I47 to A70, L136 to Q159, L176 to I200, M274 to Y292, L331 to Y354, A370 to I396, A418 to H440, and F518 to V536. Residues C560 and C569 each coordinate [4Fe-4S] cluster. A run of 2 helical transmembrane segments spans residues A576–W597 and L644–I666. Chlorophyll a is bound by residues H655, M663, and Y671. Phylloquinone is bound at residue W672. A helical transmembrane segment spans residues L708–A728.

This sequence belongs to the PsaA/PsaB family. As to quaternary structure, the PsaA/B heterodimer binds the P700 chlorophyll special pair and subsequent electron acceptors. PSI consists of a core antenna complex that captures photons, and an electron transfer chain that converts photonic excitation into a charge separation. The eukaryotic PSI reaction center is composed of at least 11 subunits. P700 is a chlorophyll a/chlorophyll a' dimer, A0 is one or more chlorophyll a, A1 is one or both phylloquinones and FX is a shared 4Fe-4S iron-sulfur center. serves as cofactor.

Its subcellular location is the plastid. It localises to the chloroplast thylakoid membrane. The catalysed reaction is reduced [plastocyanin] + hnu + oxidized [2Fe-2S]-[ferredoxin] = oxidized [plastocyanin] + reduced [2Fe-2S]-[ferredoxin]. In terms of biological role, psaA and PsaB bind P700, the primary electron donor of photosystem I (PSI), as well as the electron acceptors A0, A1 and FX. PSI is a plastocyanin/cytochrome c6-ferredoxin oxidoreductase, converting photonic excitation into a charge separation, which transfers an electron from the donor P700 chlorophyll pair to the spectroscopically characterized acceptors A0, A1, FX, FA and FB in turn. Oxidized P700 is reduced on the lumenal side of the thylakoid membrane by plastocyanin or cytochrome c6. This is Photosystem I P700 chlorophyll a apoprotein A2 from Stigeoclonium helveticum (Green alga).